Consider the following 311-residue polypeptide: Retinol dehydrogenase 8 (311 aa).

9-18 (LISGCSSGIG) is a binding site for NADP(+). 3 consecutive transmembrane segments (helical) span residues 86-106 (VLVNNAGMGLVGPLEGLSLAA), 137-157 (IVVISSVMGLQGVIFNDVYAA), and 169-189 (LAIQLLQFNIFISLVEPGPVV). S142 serves as a coordination point for substrate. Y155 serves as the catalytic Proton acceptor.

This sequence belongs to the short-chain dehydrogenases/reductases (SDR) family. As to expression, detected in photoreceptor outer segments in the retina (at protein level).

The protein resides in the membrane. The catalysed reaction is all-trans-retinol + NADP(+) = all-trans-retinal + NADPH + H(+). In terms of biological role, retinol dehydrogenase with a clear preference for NADP. Converts all-trans-retinal to all-trans-retinol. May play a role in the regeneration of visual pigment at high light intensity. The polypeptide is Retinol dehydrogenase 8 (RDH8) (Homo sapiens (Human)).